Here is a 517-residue protein sequence, read N- to C-terminus: GMP synthase [glutamine-hydrolyzing] (517 aa).

A Glutamine amidotransferase type-1 domain is found at 9 to 199 (RILILDFGSQ…VLNVCGCEGL (191 aa)). The active-site Nucleophile is Cys-86. Catalysis depends on residues His-173 and Glu-175. A GMPS ATP-PPase domain is found at 200–392 (WTSASIIEDA…LGLPYNMLYR (193 aa)). 227–233 (SGGVDSS) provides a ligand contact to ATP.

In terms of assembly, homodimer.

It carries out the reaction XMP + L-glutamine + ATP + H2O = GMP + L-glutamate + AMP + diphosphate + 2 H(+). Its pathway is purine metabolism; GMP biosynthesis; GMP from XMP (L-Gln route): step 1/1. Its function is as follows. Catalyzes the synthesis of GMP from XMP. The sequence is that of GMP synthase [glutamine-hydrolyzing] from Aliivibrio salmonicida (strain LFI1238) (Vibrio salmonicida (strain LFI1238)).